We begin with the raw amino-acid sequence, 62 residues long: Conotoxin Sr5.6 (62 aa).

The first 22 residues, 1–22 (MRCLPVFVILLLLIASASSVDA), serve as a signal peptide directing secretion. Residues 23–44 (QLKTKDDVPLTSVHDNAKGTQH) constitute a propeptide that is removed on maturation. Pro-61 carries the proline amide modification.

It belongs to the conotoxin T superfamily. In terms of processing, contains 2 disulfide bonds that can be either 'C1-C3, C2-C4' or 'C1-C4, C2-C3', since these disulfide connectivities have been observed for conotoxins with cysteine framework V (for examples, see AC P0DQQ7 and AC P81755). As to expression, expressed by the venom duct.

It localises to the secreted. The chain is Conotoxin Sr5.6 from Conus spurius (Alphabet cone).